The sequence spans 161 residues: ATP synthase subunit b 1 (161 aa).

The helical transmembrane segment at 3 to 23 threads the bilayer; it reads FDASFFALVGLVLFFVLIAYL.

It belongs to the ATPase B chain family. F-type ATPases have 2 components, F(1) - the catalytic core - and F(0) - the membrane proton channel. F(1) has five subunits: alpha(3), beta(3), gamma(1), delta(1), epsilon(1). F(0) has three main subunits: a(1), b(2) and c(10-14). The alpha and beta chains form an alternating ring which encloses part of the gamma chain. F(1) is attached to F(0) by a central stalk formed by the gamma and epsilon chains, while a peripheral stalk is formed by the delta and b chains.

It localises to the cell inner membrane. Functionally, f(1)F(0) ATP synthase produces ATP from ADP in the presence of a proton or sodium gradient. F-type ATPases consist of two structural domains, F(1) containing the extramembraneous catalytic core and F(0) containing the membrane proton channel, linked together by a central stalk and a peripheral stalk. During catalysis, ATP synthesis in the catalytic domain of F(1) is coupled via a rotary mechanism of the central stalk subunits to proton translocation. In terms of biological role, component of the F(0) channel, it forms part of the peripheral stalk, linking F(1) to F(0). The protein is ATP synthase subunit b 1 of Agrobacterium fabrum (strain C58 / ATCC 33970) (Agrobacterium tumefaciens (strain C58)).